An 881-amino-acid polypeptide reads, in one-letter code: Valine--tRNA ligase (881 aa).

Residues 49–59 (PNVTGKLHLGH) carry the 'HIGH' region motif. A 'KMSKS' region motif is present at residues 526–530 (KMSKS). Lys529 is a binding site for ATP. Residues 810-881 (LADLINLDEE…VRQRLADLEK (72 aa)) adopt a coiled-coil conformation.

This sequence belongs to the class-I aminoacyl-tRNA synthetase family. ValS type 1 subfamily. As to quaternary structure, monomer.

Its subcellular location is the cytoplasm. The enzyme catalyses tRNA(Val) + L-valine + ATP = L-valyl-tRNA(Val) + AMP + diphosphate. Its function is as follows. Catalyzes the attachment of valine to tRNA(Val). As ValRS can inadvertently accommodate and process structurally similar amino acids such as threonine, to avoid such errors, it has a 'posttransfer' editing activity that hydrolyzes mischarged Thr-tRNA(Val) in a tRNA-dependent manner. This Bacillus cereus (strain ATCC 14579 / DSM 31 / CCUG 7414 / JCM 2152 / NBRC 15305 / NCIMB 9373 / NCTC 2599 / NRRL B-3711) protein is Valine--tRNA ligase.